The following is a 578-amino-acid chain: MTQWDLKTVLSLPQYPGEFLHPVVYACTAVMLLCLLASVITYILHQSAIRISRKGRHALLNFCFHAALTFTVFAGGINRTQHPILCQAVGIALHYSTLSTMLWIGVTARNIYKQVTKKALPCPGADQPPYPKQPLLRFYLISGGVPFIICGVTAATNIRNYGTEDEDVAYCWMAWEPSLGAFYGPAAFIALVTCVYFLCTYVQLRRHPERRYELRERTEEQQRLAVPESGHRHGVRPGTPPTCDALAASQLQNEHSFKAQLRAAAFTLFLFTATWTFGALAVSQGHFLDMIFSCLYGAFCVTLGLFVLIHHCAKREDVWQCWWSCCPSRGDTSTTKPGAHPTLDANGDALGHTACLQDSPCPGKLRGFGHPPASHCKMTNLQAAQGHVSCLSPATPCCAKMHCEQLMEEEAAHIHMAEEDVYPHDPHLHDPHLHRCLKGRTKSHYFSRHQAAAAEREYAYHIPSSLDGSPHSSRSESPTSSLEGPMGMHTLACCAQADPFPMVSQPEGGDTSPGLYGCPPHLSPGPAHLEMLRRTQSLPFGGPSQNGLLQGDVREGLPFGTDGTGNIRTGPWKNETTV.

At 1-22 the chain is on the extracellular side; that stretch reads MTQWDLKTVLSLPQYPGEFLHP. A helical transmembrane segment spans residues 23–43; that stretch reads VVYACTAVMLLCLLASVITYI. Topologically, residues 44–56 are cytoplasmic; sequence LHQSAIRISRKGR. Residues 57-77 form a helical membrane-spanning segment; that stretch reads HALLNFCFHAALTFTVFAGGI. Over 78–87 the chain is Extracellular; that stretch reads NRTQHPILCQ. The chain crosses the membrane as a helical span at residues 88 to 108; the sequence is AVGIALHYSTLSTMLWIGVTA. Residues 109–137 are Cytoplasmic-facing; the sequence is RNIYKQVTKKALPCPGADQPPYPKQPLLR. The helical transmembrane segment at 138–158 threads the bilayer; the sequence is FYLISGGVPFIICGVTAATNI. The Extracellular portion of the chain corresponds to 159-178; that stretch reads RNYGTEDEDVAYCWMAWEPS. The helical transmembrane segment at 179 to 199 threads the bilayer; sequence LGAFYGPAAFIALVTCVYFLC. The Cytoplasmic portion of the chain corresponds to 200–262; sequence TYVQLRRHPE…NEHSFKAQLR (63 aa). A disordered region spans residues 216–236; that stretch reads ERTEEQQRLAVPESGHRHGVR. The chain crosses the membrane as a helical span at residues 263-283; the sequence is AAAFTLFLFTATWTFGALAVS. The Extracellular segment spans residues 284–289; the sequence is QGHFLD. The chain crosses the membrane as a helical span at residues 290–310; the sequence is MIFSCLYGAFCVTLGLFVLIH. Disordered stretches follow at residues 463-486 and 537-578; these read PSSLDGSPHSSRSESPTSSLEGPM and SLPF…ETTV. Residues 469 to 481 show a composition bias toward low complexity; the sequence is SPHSSRSESPTSS. The segment covering 537–548 has biased composition (polar residues); it reads SLPFGGPSQNGL.

Belongs to the G-protein coupled receptor 2 family. Adhesion G-protein coupled receptor (ADGR) subfamily. Predominantly expressed in CNS.

Its subcellular location is the membrane. This Mus musculus (Mouse) protein is Adhesion G protein-coupled receptor A1.